Here is a 186-residue protein sequence, read N- to C-terminus: uncharacterized protein (186 aa).

It to M.jannaschii MJ0208.

This is an uncharacterized protein from Methanocaldococcus jannaschii (strain ATCC 43067 / DSM 2661 / JAL-1 / JCM 10045 / NBRC 100440) (Methanococcus jannaschii).